Here is a 375-residue protein sequence, read N- to C-terminus: Probable aspartate aminotransferase (375 aa).

The L-aspartate site is built by glycine 31 and asparagine 165. An N6-(pyridoxal phosphate)lysine modification is found at lysine 223. Arginine 353 contributes to the L-aspartate binding site.

This sequence belongs to the class-I pyridoxal-phosphate-dependent aminotransferase family. In terms of assembly, homodimer. It depends on pyridoxal 5'-phosphate as a cofactor.

It localises to the cytoplasm. The catalysed reaction is L-aspartate + 2-oxoglutarate = oxaloacetate + L-glutamate. This is Probable aspartate aminotransferase from Methanocaldococcus jannaschii (strain ATCC 43067 / DSM 2661 / JAL-1 / JCM 10045 / NBRC 100440) (Methanococcus jannaschii).